The following is a 140-amino-acid chain: Callisulfakinin (140 aa).

A signal peptide spans 1-30; the sequence is MYSQQRIFNSKYFIFFIAVLSIFWLPTMSA. A propeptide spanning residues 31-109 is cleaved from the precursor; it reads RNLENSKNEN…LEYEDEDRSK (79 aa). Residue Y114 is modified to Sulfotyrosine. F119 carries the post-translational modification Phenylalanine amide. Y131 is subject to Sulfotyrosine. Position 136 is a phenylalanine amide (F136). A propeptide spanning residues 139–140 is cleaved from the precursor; that stretch reads SI.

This sequence belongs to the gastrin/cholecystokinin family. In brain, it is specifically expressed in four pairs of neurons. Not expressed in other cells of the brain and in the thoracico-abdominal ganglion.

It localises to the secreted. In terms of biological role, callisulfakinin I is a neuropeptide. The existence of Callisulfakinin II is uncertain. The protein is Callisulfakinin of Calliphora vomitoria (Blue bottle fly).